The chain runs to 29 residues: GLPICGETCFFGKCNTPKCTCINPICYKN.

The cyclopeptide (Gly-Asn) cross-link spans 1–29 (GLPICGETCFFGKCNTPKCTCINPICYKN). 3 cysteine pairs are disulfide-bonded: Cys-5-Cys-19, Cys-9-Cys-21, and Cys-14-Cys-26.

This sequence belongs to the cyclotide family. This is a cyclic peptide.

Probably participates in a plant defense mechanism. The protein is Cyclotide mden-F of Melicytus dentatus (Tree violet).